The primary structure comprises 465 residues: ATP-dependent protease ATPase subunit HslU (465 aa).

ATP is bound by residues Val19 and 61–66; that span reads GVGKTE. The interval 153 to 175 is disordered; it reads LFQSDGSDGDDETTEQDSHDEIR. ATP-binding residues include Asp279, Glu343, and Arg415.

It belongs to the ClpX chaperone family. HslU subfamily. In terms of assembly, a double ring-shaped homohexamer of HslV is capped on each side by a ring-shaped HslU homohexamer. The assembly of the HslU/HslV complex is dependent on binding of ATP.

The protein localises to the cytoplasm. ATPase subunit of a proteasome-like degradation complex; this subunit has chaperone activity. The binding of ATP and its subsequent hydrolysis by HslU are essential for unfolding of protein substrates subsequently hydrolyzed by HslV. HslU recognizes the N-terminal part of its protein substrates and unfolds these before they are guided to HslV for hydrolysis. The protein is ATP-dependent protease ATPase subunit HslU of Oceanobacillus iheyensis (strain DSM 14371 / CIP 107618 / JCM 11309 / KCTC 3954 / HTE831).